The primary structure comprises 826 residues: G-protein coupled receptor-associated sorting protein 2 (826 aa).

4 disordered regions span residues 1 to 126 (MTGA…AQAW), 204 to 286 (WCYP…NPFC), 336 to 371 (EGNR…QESR), and 506 to 534 (IPEG…DSVA). Over residues 13–31 (KPDKKPQEEVAGGAERESE) the composition is skewed to basic and acidic residues. Over residues 59–73 (SSRARPKTETQSVSG) the composition is skewed to polar residues. A compositionally biased stretch (basic and acidic residues) spans 231–247 (TREETSIRSWPREEVNT). A compositionally biased stretch (basic residues) spans 248-264 (RSRHRAKHQTNARSKPR). Phosphoserine occurs at positions 275 and 277.

Belongs to the GPRASP family. As to quaternary structure, interacts with cytoplasmic tails of a variety of G-protein coupled receptors such as muscarinic acetylcholine receptor M1/CHRM1 and calcitonin receptor/CALCR. Strongly expressed in the brain and the cochlea. Also in lung and muscle tissues. Localized in multiple structures of the cochlea, detected in the spiral ganglion, stria vascularis, spiral ligament, inner and outer hair cells.

May play a role in regulation of a variety of G-protein coupled receptors. This chain is G-protein coupled receptor-associated sorting protein 2 (Gprasp2), found in Mus musculus (Mouse).